A 105-amino-acid polypeptide reads, in one-letter code: Diuretic hormone class 2 (105 aa).

Positions 1–23 are cleaved as a signal peptide; that stretch reads MTVLCTLMAFVMVVAISSLTVDA. Positions 24 to 63 are excised as a propeptide; sequence IPHSHESYWDQQDDIDRDEFLELLSRLSRTVMNRPEMENS. At proline 96 the chain carries Proline amide. Positions 101-105 are excised as a propeptide; sequence RSEQA.

Expressed in central brain, antennal lobes, retrocerebral complex and gnathal, thoracic and abdominal ganglia but not in optical lobes (at protein level).

Its subcellular location is the secreted. Its function is as follows. Regulation of fluid secretion. Stimulates Malpighian tubules fluid secretion. The polypeptide is Diuretic hormone class 2 (Camponotus floridanus (Florida carpenter ant)).